The sequence spans 379 residues: Homoserine O-succinyltransferase (379 aa).

The AB hydrolase-1 domain occupies 51–360 (NAVLICHALS…DAPQGHDAFL (310 aa)). The active-site Nucleophile is the S157. Substrate is bound at residue R227. Catalysis depends on residues D323 and H356. Substrate is bound at residue D357.

The protein belongs to the AB hydrolase superfamily. MetX family. Homodimer.

Its subcellular location is the cytoplasm. The catalysed reaction is L-homoserine + succinyl-CoA = O-succinyl-L-homoserine + CoA. The protein operates within amino-acid biosynthesis; L-methionine biosynthesis via de novo pathway; O-succinyl-L-homoserine from L-homoserine: step 1/1. Functionally, transfers a succinyl group from succinyl-CoA to L-homoserine, forming succinyl-L-homoserine. In Pseudomonas aeruginosa (strain LESB58), this protein is Homoserine O-succinyltransferase.